A 358-amino-acid polypeptide reads, in one-letter code: Phospho-N-acetylmuramoyl-pentapeptide-transferase (358 aa).

The next 10 membrane-spanning stretches (helical) occupy residues 26–46, 71–91, 93–113, 134–154, 170–190, 197–217, 234–254, 261–281, 286–306, and 335–355; these read TIYAMITALIVCFVLGPWIIR, TPTMGGLIILTAIILPTLLWA, LTNVYIWLTLFIIVGYGLIGF, MFWQVLLAGGVAVFLYVTPGF, LGIFFIPFVTLVIVGASNAVN, GLAIGPVAINAATYMLFAYVA, AGELAVICGAMVGAGLGFLWF, VFMGDVGSLSLGGTLGVIAVL, ILLVIVGGIFVIEALSVIFQV, and KIIVRFWIITIILALVAISTL.

The protein belongs to the glycosyltransferase 4 family. MraY subfamily. Mg(2+) is required as a cofactor.

Its subcellular location is the cell inner membrane. The enzyme catalyses UDP-N-acetyl-alpha-D-muramoyl-L-alanyl-gamma-D-glutamyl-meso-2,6-diaminopimeloyl-D-alanyl-D-alanine + di-trans,octa-cis-undecaprenyl phosphate = di-trans,octa-cis-undecaprenyl diphospho-N-acetyl-alpha-D-muramoyl-L-alanyl-D-glutamyl-meso-2,6-diaminopimeloyl-D-alanyl-D-alanine + UMP. Its pathway is cell wall biogenesis; peptidoglycan biosynthesis. Functionally, catalyzes the initial step of the lipid cycle reactions in the biosynthesis of the cell wall peptidoglycan: transfers peptidoglycan precursor phospho-MurNAc-pentapeptide from UDP-MurNAc-pentapeptide onto the lipid carrier undecaprenyl phosphate, yielding undecaprenyl-pyrophosphoryl-MurNAc-pentapeptide, known as lipid I. This chain is Phospho-N-acetylmuramoyl-pentapeptide-transferase, found in Trichlorobacter lovleyi (strain ATCC BAA-1151 / DSM 17278 / SZ) (Geobacter lovleyi).